The chain runs to 1025 residues: MSNLLKDFEVASKNPSLEARQRWRSSVGLVKNRARRFRMISNLDKLAENEKKRCQIQEKIRVVFYVQKAAFQFIDAGARPEYKLTDEVKKAGFYVEADELASMVRNHDTKSLTKIGGPEGIAQKVSVSLAEGVRSSELHIREKIYGENRYTEKPARSFLTFVWEALQDITLIILMVCAVVSIGVGVATEGFPKGMYDGTGILLSIILVVMVTAISDYKQSLQFRDLDREKKKIIIQVTRDGSRQEVSIHDLVVGDVVHLSIGDQVPADGIFISGYNLEIDESSLSGESEPSHVNKEKPFLLSGTKVQNGSAKMLVTTVGMRTEWGKLMDTLSEGGEDETPLQVKLNGVATIIGKIGLGFAVLTFVVLCIRFVVEKATAGSITEWSSEDALTLLDYFAIAVTIIVVAVPEGLPLAVTLSLAFAMKQLMSDRALVRHLAACETMGSSTCICTDKTGTLTTNHMVVNKVWICENIKERQEENFQLNLSEQVKNILIQAIFQNTGSEVVKDKEGKTQILGSPTERAILEFGLLLGGDVDTQRREHKILKIEPFNSDKKKMSVLTSHSGGKVRAFCKGASEIVLKMCEKVVDSNGESVPLSEEKIASISDVIEGFASEALRTLCLVYTDLDEAPRGDLPNGGYTLVAVVGIKDPVRPGVREAVQTCQAAGITVRMVTGDNISTAKAIAKECGILTAGGVAIEGSDFRNLPPHEMRAILPKIQVMARSLPLDKHTLVNNLRKMGEVVAVTGDGTNDAPALHEADIGLAMGIAGTEVAKENADVIIMDDNFATIVNVAKWGRAVYINIQKFVQFQLTVNVVALIINFVSACITGSAPLTAVQLLWVNMIMDTLGALALATEPPNEGLMKRQPIGRTASFITRAMWRNIIGQSIYQLIVLGILNFAGKQILNLNGPDSTIVLNTIIFNSFVFCQVFNEVNSREIEKINVFEGMFKSWVFVAVMTATVGFQVIIVEFLGAFASTVPLSWQHWLLCILIGSVSMILAVGLKCIPVESNRHHDGYELLPSGPSDSA.

Topologically, residues 1-157 are cytoplasmic; the sequence is MSNLLKDFEV…NRYTEKPARS (157 aa). Residues 19–30 are interaction with calmodulin; the sequence is ARQRWRSSVGLV. Residues 158–178 traverse the membrane as a helical segment; sequence FLTFVWEALQDITLIILMVCA. Residues 179 to 196 lie on the Lumenal side of the membrane; that stretch reads VVSIGVGVATEGFPKGMY. The helical transmembrane segment at 197-217 threads the bilayer; it reads DGTGILLSIILVVMVTAISDY. The Cytoplasmic portion of the chain corresponds to 218 to 345; sequence KQSLQFRDLD…EDETPLQVKL (128 aa). The chain crosses the membrane as a helical span at residues 346–365; the sequence is NGVATIIGKIGLGFAVLTFV. Over 366 to 395 the chain is Lumenal; it reads VLCIRFVVEKATAGSITEWSSEDALTLLDY. Residues 396–413 traverse the membrane as a helical segment; that stretch reads FAIAVTIIVVAVPEGLPL. At 414-801 the chain is on the cytoplasmic side; the sequence is AVTLSLAFAM…KWGRAVYINI (388 aa). Aspartate 451 (4-aspartylphosphate intermediate) is an active-site residue. The Mg(2+) site is built by aspartate 746 and aspartate 750. A helical membrane pass occupies residues 802–820; the sequence is QKFVQFQLTVNVVALIINF. Residues 821–831 are Lumenal-facing; the sequence is VSACITGSAPL. Residues 832–852 form a helical membrane-spanning segment; it reads TAVQLLWVNMIMDTLGALALA. The Cytoplasmic portion of the chain corresponds to 853 to 872; sequence TEPPNEGLMKRQPIGRTASF. The chain crosses the membrane as a helical span at residues 873-895; sequence ITRAMWRNIIGQSIYQLIVLGIL. Residues 896-907 are Lumenal-facing; sequence NFAGKQILNLNG. Residues 908 to 929 form a helical membrane-spanning segment; it reads PDSTIVLNTIIFNSFVFCQVFN. Residues 930 to 947 are Cytoplasmic-facing; the sequence is EVNSREIEKINVFEGMFK. Residues 948–969 traverse the membrane as a helical segment; that stretch reads SWVFVAVMTATVGFQVIIVEFL. Over 970–979 the chain is Lumenal; it reads GAFASTVPLS. Residues 980 to 1001 form a helical membrane-spanning segment; sequence WQHWLLCILIGSVSMILAVGLK. Residues 1002–1025 lie on the Cytoplasmic side of the membrane; the sequence is CIPVESNRHHDGYELLPSGPSDSA.

This sequence belongs to the cation transport ATPase (P-type) (TC 3.A.3) family. Type IIB subfamily.

The protein resides in the membrane. The enzyme catalyses Ca(2+)(in) + ATP + H2O = Ca(2+)(out) + ADP + phosphate + H(+). Activated by calmodulin. This magnesium-dependent enzyme catalyzes the hydrolysis of ATP coupled with the translocation of calcium from the cytosol out of the cell or into organelles. The protein is Putative calcium-transporting ATPase 11, plasma membrane-type (ACA11) of Arabidopsis thaliana (Mouse-ear cress).